The sequence spans 436 residues: 4-hydroxyphenylpyruvate dioxygenase (436 aa).

VOC domains are found at residues 38 to 194 (RFHH…GFEV) and 210 to 370 (RLDH…IFTK). H213, H295, and E381 together coordinate Fe cation.

It belongs to the 4HPPD family. The cofactor is Fe cation.

The protein resides in the cytoplasm. It carries out the reaction 3-(4-hydroxyphenyl)pyruvate + O2 = homogentisate + CO2. Its pathway is amino-acid degradation; L-phenylalanine degradation; acetoacetate and fumarate from L-phenylalanine: step 3/6. It functions in the pathway cofactor biosynthesis; prenylquinone biosynthesis. In Plectranthus scutellarioides (Coleus), this protein is 4-hydroxyphenylpyruvate dioxygenase.